The following is a 104-amino-acid chain: Probable guanidinium efflux system subunit GdnD (104 aa).

Helical transmembrane passes span Trp-3 to Phe-23, Trp-31 to Glu-51, Ala-58 to Tyr-78, and Gly-84 to Ser-104.

The protein belongs to the drug/metabolite transporter (DMT) superfamily. Small multidrug resistance (SMR) (TC 2.A.7.1) family. YkkC/YkkD subfamily. In terms of assembly, the efflux pump is composed of GdnC and GdnD.

It localises to the cell membrane. Functionally, probably involved in guanidinium transport. The polypeptide is Probable guanidinium efflux system subunit GdnD (Bacillus licheniformis (strain ATCC 14580 / DSM 13 / JCM 2505 / CCUG 7422 / NBRC 12200 / NCIMB 9375 / NCTC 10341 / NRRL NRS-1264 / Gibson 46)).